Here is a 558-residue protein sequence, read N- to C-terminus: Membrane protein insertase YidC (558 aa).

The next 5 helical transmembrane spans lie at 3–23, 364–384, 438–458, 477–497, and 508–528; these read IKRTVLWVIFFMSAVMLFDNW, FVGNWGWAIVLLTLLIKAVFF, LPVVIQIPVFISLYWVLLASV, PYFILPVLMAVSMFVQTKLNP, and MMFMPIAFSVMFFFFPAGLVL.

This sequence belongs to the OXA1/ALB3/YidC family. Type 1 subfamily. In terms of assembly, interacts with the Sec translocase complex via SecD. Specifically interacts with transmembrane segments of nascent integral membrane proteins during membrane integration.

It localises to the cell inner membrane. Required for the insertion and/or proper folding and/or complex formation of integral membrane proteins into the membrane. Involved in integration of membrane proteins that insert both dependently and independently of the Sec translocase complex, as well as at least some lipoproteins. Aids folding of multispanning membrane proteins. This Burkholderia pseudomallei (strain K96243) protein is Membrane protein insertase YidC.